The chain runs to 396 residues: Elongation factor Tu-B (396 aa).

Positions 10-206 (KLHVNVGTIG…ALDTFIPDPT (197 aa)) constitute a tr-type G domain. The interval 19–26 (GHVDHGKT) is G1. 19 to 26 (GHVDHGKT) contributes to the GTP binding site. Residue Thr-26 participates in Mg(2+) binding. The tract at residues 60–64 (GITIS) is G2. The interval 81–84 (DCPG) is G3. Residues 81–85 (DCPGH) and 136–139 (NKAD) each bind GTP. Positions 136 to 139 (NKAD) are G4. The segment at 174–176 (SAR) is G5.

Belongs to the TRAFAC class translation factor GTPase superfamily. Classic translation factor GTPase family. EF-Tu/EF-1A subfamily. In terms of assembly, monomer.

It is found in the cytoplasm. The catalysed reaction is GTP + H2O = GDP + phosphate + H(+). Its function is as follows. GTP hydrolase that promotes the GTP-dependent binding of aminoacyl-tRNA to the A-site of ribosomes during protein biosynthesis. In Xanthomonas campestris pv. campestris (strain ATCC 33913 / DSM 3586 / NCPPB 528 / LMG 568 / P 25), this protein is Elongation factor Tu-B.